Here is a 415-residue protein sequence, read N- to C-terminus: Zinc finger protein ZFMSA12A (415 aa).

The disordered stretch occupies residues M1–P36. 12 C2H2-type zinc fingers span residues H78–H100, Y106–C129, Y134–H156, F161–H183, F189–H211, N217–H239, Q245–H267, F273–H295, Y301–H323, Y329–H351, Y357–H379, and Y385–H407.

Its subcellular location is the nucleus. In Micropterus salmoides (Largemouth bass), this protein is Zinc finger protein ZFMSA12A.